A 390-amino-acid chain; its full sequence is S-adenosylmethionine synthase 3 (390 aa).

E9 contacts Mg(2+). An ATP-binding site is contributed by H15. E43 is a K(+) binding site. L-methionine is bound by residues E56 and Q99. Residues 167–169, 235–238, D246, 252–253, A269, K273, and K277 contribute to the ATP site; these read DGK, SGRF, and RK. Position 246 (D246) interacts with L-methionine. K277 contributes to the L-methionine binding site.

It belongs to the AdoMet synthase family. As to quaternary structure, homotetramer. It depends on Mn(2+) as a cofactor. Mg(2+) is required as a cofactor. Co(2+) serves as cofactor. Requires K(+) as cofactor. Mostly expressed in stems and leaves.

The protein resides in the cytoplasm. The enzyme catalyses L-methionine + ATP + H2O = S-adenosyl-L-methionine + phosphate + diphosphate. It participates in amino-acid biosynthesis; S-adenosyl-L-methionine biosynthesis; S-adenosyl-L-methionine from L-methionine: step 1/1. Functionally, catalyzes the formation of S-adenosylmethionine from methionine and ATP. The reaction comprises two steps that are both catalyzed by the same enzyme: formation of S-adenosylmethionine (AdoMet) and triphosphate, and subsequent hydrolysis of the triphosphate. This Solanum lycopersicum (Tomato) protein is S-adenosylmethionine synthase 3 (SAM3).